Here is a 323-residue protein sequence, read N- to C-terminus: uncharacterized protein (323 aa).

Helical transmembrane passes span 8–28, 32–52, and 92–112; these read FLVI…MFME, LTLL…PFSL, and ITIF…CGIF.

It is found in the mitochondrion membrane. This is an uncharacterized protein from Neurospora crassa (strain ATCC 24698 / 74-OR23-1A / CBS 708.71 / DSM 1257 / FGSC 987).